The chain runs to 273 residues: Outer surface protein A (273 aa).

The N-terminal stretch at 1–16 (MKKYLLGIGLILALIA) is a signal peptide. A lipid anchor (N-palmitoyl cysteine) is attached at Cys17. Cys17 is lipidated: S-diacylglycerol cysteine.

The protein belongs to the OspA lipoprotein family.

Its subcellular location is the cell outer membrane. It is found in the cell surface. This chain is Outer surface protein A, found in Borreliella burgdorferi (Lyme disease spirochete).